We begin with the raw amino-acid sequence, 398 residues long: O-methyltransferase mpaG (398 aa).

Position 144 (serine 144) interacts with (4E,8E)-10-(4,6-dihydroxy-7-methyl-3-oxo-1,3-dihydro-2-benzofuran-5-yl)-4,8-dimethyldeca-4,8-dienoate. Serine 144 contacts 4-farnesyl-3,5-dihydroxy-6-methylphthalide. Serine 144 is a 6-O-desmethylmycophenolate binding site. Asparagine 197 lines the S-adenosyl-L-homocysteine pocket. Tyrosine 199 provides a ligand contact to (4E,8E)-10-(4,6-dihydroxy-7-methyl-3-oxo-1,3-dihydro-2-benzofuran-5-yl)-4,8-dimethyldeca-4,8-dienoate. Position 199 (tyrosine 199) interacts with 4-farnesyl-3,5-dihydroxy-6-methylphthalide. Residue tyrosine 199 coordinates 6-O-desmethylmycophenolate. Residues tyrosine 203, aspartate 237, glycine 239, histidine 244, aspartate 245, aspartate 264, and arginine 265 each contribute to the S-adenosyl-L-homocysteine site. Residue aspartate 264 participates in S-adenosyl-L-methionine binding. Residues arginine 265 and glutamine 267 each coordinate (4E,8E)-10-(4,6-dihydroxy-7-methyl-3-oxo-1,3-dihydro-2-benzofuran-5-yl)-4,8-dimethyldeca-4,8-dienoate. Arginine 265 is a binding site for 6-O-desmethylmycophenolate. Aspartate 286, isoleucine 287, and histidine 302 together coordinate S-adenosyl-L-homocysteine. Serine 303 serves as a coordination point for (4E,8E)-10-(4,6-dihydroxy-7-methyl-3-oxo-1,3-dihydro-2-benzofuran-5-yl)-4,8-dimethyldeca-4,8-dienoate. Serine 303 is a binding site for 4-farnesyl-3,5-dihydroxy-6-methylphthalide. 6-O-desmethylmycophenolate is bound at residue serine 303. Residue histidine 306 is the Proton acceptor of the active site. Residues glutamate 335 and glutamate 362 contribute to the active site.

It belongs to the class I-like SAM-binding methyltransferase superfamily. Cation-independent O-methyltransferase family. COMT subfamily. Homodimer.

The protein resides in the cytoplasm. It is found in the cytosol. It catalyses the reaction (4E,8E)-10-(4,6-dihydroxy-7-methyl-3-oxo-1,3-dihydro-2-benzofuran-5-yl)-4,8-dimethyldeca-4,8-dienoate + S-adenosyl-L-methionine = (4E,8E)-10-(4-hydroxy-6-methoxy-7-methyl-3-oxo-1,3-dihydro-2-benzofuran-5-yl)-4,8-dimethyldeca-4,8-dienoate + S-adenosyl-L-homocysteine + H(+). The enzyme catalyses 4-farnesyl-3,5-dihydroxy-6-methylphthalide + S-adenosyl-L-methionine = 4-farnesyl-3,5-dihydroxy-6-methoxylphthalide + S-adenosyl-L-homocysteine + H(+). The catalysed reaction is 6-O-desmethylmycophenolate + S-adenosyl-L-methionine = mycophenolate + S-adenosyl-L-homocysteine + H(+). Its pathway is secondary metabolite biosynthesis; terpenoid biosynthesis. O-methyltransferase; part of the gene cluster that mediates the biosynthesis of mycophenolic acid (MPA), the first isolated antibiotic natural product in the world obtained from a culture of Penicillium brevicompactum in 1893. MpaG methylates farnesyl-DHMP-3C (FDHMP-3C) to yield MFDHMP-3C. The first step of the pathway is the synthesis of 5-methylorsellinic acid (5MOA) by the cytosolic polyketide synthase mpaC. 5MOA is then converted to the phthalide compound 5,7-dihydroxy-4,6-dimethylphthalide (DHMP) by the endoplasmic reticulum-bound cytochrome P450 monooxygenase mpaDE. MpaDE first catalyzes hydroxylation of 5-MOA to 4,6-dihydroxy-2-(hydroxymethyl)-3-methylbenzoic acid (DHMB). MpaDE then acts as a lactone synthase that catalyzes the ring closure to convert DHMB into DHMP. The next step is the prenylation of DHMP by the Golgi apparatus-associated prenyltransferase mpaA to yield farnesyl-DHMP (FDHMP). The ER-bound oxygenase mpaB then mediates the oxidative cleavage the C19-C20 double bond in FDHMP to yield FDHMP-3C via a mycophenolic aldehyde intermediate. The O-methyltransferase mpaG catalyzes the methylation of FDHMP-3C to yield MFDHMP-3C. MpaG and mpaB can also switch the order in which they act and, in this case, the conversion of FDHMP to MFDHMP-3C can take place via 5-O-methyl-FDHMP (MFDHMP). After the cytosolic methylation of FDHMP-3C, MFDHMP-3C enters into peroxisomes probably via free diffusion due to its low molecular weight. Upon a peroxisomal CoA ligation reaction, catalyzed by a beta-oxidation component enzyme acyl-CoA ligase ACL891, MFDHMP-3C-CoA would then be restricted to peroxisomes for the following beta-oxidation pathway steps. The peroxisomal beta-oxidation machinery than converts MFDHMP-3C-CoA into MPA_CoA, via a beta-oxidation chain-shortening process. Finally mpaH acts as a peroxisomal acyl-CoA hydrolase with high substrate specificity toward MPA-CoA to release the final product MPA. MpaH can also hydrolyze DMMPA-CoA to release demethylmycophenolic acid (DMMPA) that is further converted to MPA by mpaG. This Penicillium brevicompactum protein is O-methyltransferase mpaG.